Consider the following 447-residue polypeptide: Tubulin alpha chain (447 aa).

GTP contacts are provided by Gln11, Glu71, Gly144, Thr145, Thr179, Asn206, and Asn228. Glu71 provides a ligand contact to Mg(2+). Glu254 is a catalytic residue.

Belongs to the tubulin family. Dimer of alpha and beta chains. A typical microtubule is a hollow water-filled tube with an outer diameter of 25 nm and an inner diameter of 15 nM. Alpha-beta heterodimers associate head-to-tail to form protofilaments running lengthwise along the microtubule wall with the beta-tubulin subunit facing the microtubule plus end conferring a structural polarity. Microtubules usually have 13 protofilaments but different protofilament numbers can be found in some organisms and specialized cells. Mg(2+) serves as cofactor.

The protein localises to the cytoplasm. It localises to the cytoskeleton. The enzyme catalyses GTP + H2O = GDP + phosphate + H(+). Functionally, tubulin is the major constituent of microtubules, a cylinder consisting of laterally associated linear protofilaments composed of alpha- and beta-tubulin heterodimers. Microtubules grow by the addition of GTP-tubulin dimers to the microtubule end, where a stabilizing cap forms. Below the cap, tubulin dimers are in GDP-bound state, owing to GTPase activity of alpha-tubulin. The chain is Tubulin alpha chain (TUBA) from Avena sativa (Oat).